Consider the following 105-residue polypeptide: Thioredoxin (105 aa).

One can recognise a Thioredoxin domain in the interval 2–105; that stretch reads VKIVGDLTEF…KLEEAIKKYM (104 aa). Catalysis depends on nucleophile residues Cys32 and Cys35. Cysteines 32 and 35 form a disulfide. S-nitrosocysteine is present on residues Cys69 and Cys73.

This sequence belongs to the thioredoxin family. Post-translationally, may be nitrosylated on several cysteine residues, depending on the oxidation state. Nitrosylated Cys-73 may serve as donor for nitrosylation of target proteins.

It localises to the nucleus. The protein localises to the cytoplasm. Its subcellular location is the secreted. Its function is as follows. Participates in various redox reactions through the reversible oxidation of its active center dithiol to a disulfide and catalyzes dithiol-disulfide exchange reactions. Plays a role in the reversible S-nitrosylation of cysteine residues in target proteins, and thereby contributes to the response to intracellular nitric oxide. Nitrosylates the active site Cys of CASP3 in response to nitric oxide (NO), and thereby inhibits caspase-3 activity. Induces the FOS/JUN AP-1 DNA binding activity in ionizing radiation (IR) cells through its oxidation/reduction status and stimulates AP-1 transcriptional activity. This chain is Thioredoxin (TXN), found in Ophiophagus hannah (King cobra).